Reading from the N-terminus, the 84-residue chain is Exodeoxyribonuclease 7 small subunit (84 aa).

It belongs to the XseB family. As to quaternary structure, heterooligomer composed of large and small subunits.

It is found in the cytoplasm. It catalyses the reaction Exonucleolytic cleavage in either 5'- to 3'- or 3'- to 5'-direction to yield nucleoside 5'-phosphates.. Bidirectionally degrades single-stranded DNA into large acid-insoluble oligonucleotides, which are then degraded further into small acid-soluble oligonucleotides. This chain is Exodeoxyribonuclease 7 small subunit, found in Bartonella quintana (strain Toulouse) (Rochalimaea quintana).